Here is an 872-residue protein sequence, read N- to C-terminus: Tegument protein UL47 homolog (872 aa).

The disordered stretch occupies residues 1–206; the sequence is MDQHHGVRGG…ENDTEVISDD (206 aa). A Nuclear localization signal motif is present at residues 13-33; it reads IRRPRRSIETRSHPFRAAGNT. Positions 31 to 41 are enriched in polar residues; it reads GNTQRTYSTPR. 2 stretches are compositionally biased toward low complexity: residues 66–80 and 91–101; these read ESSTQSTSNNQPSTS and DDAPAQPQAPR. 2 stretches are compositionally biased toward acidic residues: residues 110-134 and 177-204; these read PEEDSSSEEEDEEGPSQAPLDEEDQ and AEEEPESESESDMENYETYEENDTEVIS.

This sequence belongs to the alphaherpesvirinae HHV-1 UL47 family. In terms of assembly, interacts with US3 kinase. Interacts with UL31 and UL34; these interactions seem important for efficient virion nuclear egress. Interacts with UL41/VHS. Phosphorylated by US3. This phosphorylation is required for proper nuclear localization. Post-translationally, O-glycosylated.

It is found in the virion tegument. It localises to the host nucleus. The protein resides in the host cytoplasm. Tegument protein that can bind to various RNA transcripts. Plays a role in the attenuation of selective viral and cellular mRNA degradation by modulating the activity of host shutoff RNase UL41/VHS. Also plays a role in the primary envelopment of virions in the perinuclear space, probably by interacting with two nuclear egress proteins UL31 and UL34. The protein is Tegument protein UL47 homolog (13) of Equus caballus (Horse).